A 129-amino-acid polypeptide reads, in one-letter code: MAKEATRIRRRERKNIVSGVAHVNASFNNTMITITDAQGNTISWSSAGAMGFKGSRKSTPYAAQVAAEDAGRKAAEHGMRTLEVEVSGPGSGRESALRALQAAGFTVTSIRDVTPIPHNGCRPRKRRRV.

This sequence belongs to the universal ribosomal protein uS11 family. Part of the 30S ribosomal subunit. Interacts with proteins S7 and S18. Binds to IF-3.

Functionally, located on the platform of the 30S subunit, it bridges several disparate RNA helices of the 16S rRNA. Forms part of the Shine-Dalgarno cleft in the 70S ribosome. The chain is Small ribosomal subunit protein uS11 from Methylobacterium sp. (strain 4-46).